We begin with the raw amino-acid sequence, 354 residues long: Ephrin-4 (354 aa).

The signal sequence occupies residues 1-22; the sequence is MKRPLDFLLAICLILLRSSTFA. The Ephrin RBD domain maps to 23–173; it reads DEHTVHWNST…SKNMRLSMKV (151 aa). The N-linked (GlcNAc...) asparagine glycan is linked to asparagine 30. Disulfide bonds link cysteine 55–cysteine 92 and cysteine 80–cysteine 162. Residues 173-196 form a disordered region; it reads VLSSQPTPSPSSKPARSRTDARRQ. Positions 175–186 are enriched in low complexity; sequence SSQPTPSPSSKP. Residue serine 335 is the site of GPI-anchor amidated serine attachment. A propeptide spans 336-354 (removed in mature form); sequence SSSLPTFLIVFLIAVNLLF.

The protein belongs to the ephrin family. Post-translationally, may undergo proteolysis by metalloprotease sup-17 to give rise to a soluble form.

The protein localises to the cell membrane. Functionally, regulates the formation or stabilization of cell-cell contacts at several stages of epithelial morphogenesis. In early embryonic development, involved in ventral closure of the epidermis. During male tail morphogenesis, regulates precursor cell sorting together with mab-20 and allows the formation of distinct sensory rays. Probably acts as a ligand for lad-2 to regulate axon guidance of several neurons including SDQL, SDQR, SMD and PLN neurons during neurogenesis. The sequence is that of Ephrin-4 (efn-4) from Caenorhabditis briggsae.